The chain runs to 409 residues: tRNA-specific 2-thiouridylase MnmA (409 aa).

ATP is bound by residues 40–47 (GLSGGVDS) and leucine 66. Residue cysteine 127 is the Nucleophile of the active site. Cysteine 127 and cysteine 237 are joined by a disulfide. Glycine 152 is an ATP binding site. Positions 156-179 (RIRHREDPEPQQALPGDSSGRHQL) are disordered. The segment at 187–189 (KDQ) is interaction with tRNA. The active-site Cysteine persulfide intermediate is the cysteine 237. Residues 342 to 343 (RY) form an interaction with tRNA region.

Belongs to the MnmA/TRMU family.

The protein resides in the cytoplasm. It catalyses the reaction S-sulfanyl-L-cysteinyl-[protein] + uridine(34) in tRNA + AH2 + ATP = 2-thiouridine(34) in tRNA + L-cysteinyl-[protein] + A + AMP + diphosphate + H(+). Functionally, catalyzes the 2-thiolation of uridine at the wobble position (U34) of tRNA, leading to the formation of s(2)U34. The protein is tRNA-specific 2-thiouridylase MnmA of Prochlorococcus marinus (strain MIT 9303).